The following is a 553-amino-acid chain: COP9 signalosome complex subunit 10 (553 aa).

The segment covering 21–46 has biased composition (acidic residues); it reads AEMEEDSDEMGVYEEETSQGAEEEVP. The segment at 21–47 is disordered; that stretch reads AEMEEDSDEMGVYEEETSQGAEEEVPL. The PCI domain maps to 298-474; sequence LRTHFSACLQ…DYVYFGDEPR (177 aa).

In terms of assembly, component of a COP9 signalosome-like (CSN) complex.

Its subcellular location is the cytoplasm. It is found in the nucleus. Component of the COP9 signalosome (CSN) complex that acts as an regulator of the ubiquitin (Ubl) conjugation pathway by mediating the deneddylation of the cullin subunit of SCF-type E3 ubiquitin-protein ligase complexes. The CSN complex is involved in the regulation of the mating pheromone response. The sequence is that of COP9 signalosome complex subunit 10 (RRI2) from Eremothecium gossypii (strain ATCC 10895 / CBS 109.51 / FGSC 9923 / NRRL Y-1056) (Yeast).